The primary structure comprises 217 residues: Oxygen regulatory protein NreC (217 aa).

The region spanning 2-119 (KIVIADDHAV…QLLLAIRTVY (118 aa)) is the Response regulatory domain. Aspartate 53 bears the 4-aspartylphosphate mark. The HTH luxR-type domain maps to 148–213 (TTDPFKILSK…ELVEYALKKK (66 aa)). Residues 172–191 (NKEIAEKLFVSVKTVEAHKT) constitute a DNA-binding region (H-T-H motif).

Post-translationally, phosphorylated by NreB.

The protein resides in the cytoplasm. Functionally, member of the two-component regulatory system NreB/NreC involved in the control of dissimilatory nitrate/nitrite reduction in response to oxygen. Phosphorylated NreC binds to a GC-rich palindromic sequence at the promoters of the nitrate (narGHJI) and nitrite (nir) reductase operons, as well as the putative nitrate transporter gene narT, and activates their expression. This is Oxygen regulatory protein NreC (nreC) from Staphylococcus aureus (strain USA300 / TCH1516).